We begin with the raw amino-acid sequence, 583 residues long: Aspartate--tRNA ligase (583 aa).

L-aspartate is bound at residue Glu-169. Positions Gln-193–Lys-196 are aspartate. Arg-215 lines the L-aspartate pocket. Residues Arg-215–Glu-217 and Gln-224 each bind ATP. His-443 is a binding site for L-aspartate. Residue Glu-477 coordinates ATP. Residue Arg-484 participates in L-aspartate binding. An ATP-binding site is contributed by Gly-529–Arg-532.

This sequence belongs to the class-II aminoacyl-tRNA synthetase family. Type 1 subfamily. In terms of assembly, homodimer.

The protein localises to the cytoplasm. It catalyses the reaction tRNA(Asp) + L-aspartate + ATP = L-aspartyl-tRNA(Asp) + AMP + diphosphate. Functionally, catalyzes the attachment of L-aspartate to tRNA(Asp) in a two-step reaction: L-aspartate is first activated by ATP to form Asp-AMP and then transferred to the acceptor end of tRNA(Asp). This chain is Aspartate--tRNA ligase, found in Stenotrophomonas maltophilia (strain K279a).